A 969-amino-acid chain; its full sequence is Leucine--tRNA ligase (969 aa).

Residues Met1–Pro23 form a disordered region. The 'HIGH' region motif lies at Pro78–His89. A 'KMSKS' region motif is present at residues Lys737–Ser741. Position 740 (Lys740) interacts with ATP.

The protein belongs to the class-I aminoacyl-tRNA synthetase family.

The protein resides in the cytoplasm. The enzyme catalyses tRNA(Leu) + L-leucine + ATP = L-leucyl-tRNA(Leu) + AMP + diphosphate. The sequence is that of Leucine--tRNA ligase from Mycobacterium avium (strain 104).